Here is a 586-residue protein sequence, read N- to C-terminus: Isocitrate dehydrogenase kinase/phosphatase (586 aa).

ATP is bound by residues 316-322 (ARGDRGL) and Lys-337. Asp-372 is a catalytic residue.

This sequence belongs to the AceK family.

Its subcellular location is the cytoplasm. The enzyme catalyses L-seryl-[isocitrate dehydrogenase] + ATP = O-phospho-L-seryl-[isocitrate dehydrogenase] + ADP + H(+). Functionally, bifunctional enzyme which can phosphorylate or dephosphorylate isocitrate dehydrogenase (IDH) on a specific serine residue. This is a regulatory mechanism which enables bacteria to bypass the Krebs cycle via the glyoxylate shunt in response to the source of carbon. When bacteria are grown on glucose, IDH is fully active and unphosphorylated, but when grown on acetate or ethanol, the activity of IDH declines drastically concomitant with its phosphorylation. This chain is Isocitrate dehydrogenase kinase/phosphatase, found in Anaeromyxobacter dehalogenans (strain 2CP-C).